The chain runs to 1363 residues: Spike glycoprotein (1363 aa).

A signal peptide spans 1 to 13; it reads MFLILLISLPMAL. The Extracellular segment spans residues 14-1307; the sequence is AVIGDLKCTT…GTYEYYVKWP (1294 aa). Residues 15-298 form the BetaCoV S1-NTD domain; that stretch reads VIGDLKCTTV…DFMSEIKCKT (284 aa). 5 disulfides stabilise this stretch: C21–C165, C160–C193, C172–C252, C286–C296, and C331–C356. N59 and N133 each carry an N-linked (GlcNAc...) asparagine; by host glycan. N-linked (GlcNAc...) asparagine; by host glycosylation occurs at N198. A BetaCoV S1-CTD domain is found at 329–617; the sequence is PDCNIEAWLN…DVNSGTTCST (289 aa). N-linked (GlcNAc...) asparagine; by host glycosylation occurs at N359. 2 disulfide bridges follow: C374–C427 and C386–C615. 7 N-linked (GlcNAc...) asparagine; by host glycosylation sites follow: N437, N649, N676, N696, N714, N739, and N788. Fusion peptide regions lie at residues 914–935 and 933–953; these read SAIEDLLFSKVKLSDVGFVEAY and EAYNNCTGGAEIRDLICVQSY. N-linked (GlcNAc...) asparagine; by host glycosylation is present at N937. A disulfide bridge connects residues C938 and C949. Residues 1014-1064 are heptad repeat 1; sequence QKLIANAFNNALDAIQEGFDATNSALVKIQAVVNANAEALNNLLQQLSNRF. Positions 1043–1087 form a coiled coil; sequence QAVVNANAEALNNLLQQLSNRFGAISSSLQEILSRLDALEAQRQI. N-linked (GlcNAc...) asparagine; by host glycans are attached at residues N1194, N1224, N1234, N1253, N1267, and N1288. The segment at 1258–1296 is heptad repeat 2; the sequence is APDLSLDYINVTFLDLQDEMNRLQEAIKLLNQSYINLKD. Residues 1269-1297 are a coiled coil; sequence TFLDLQDEMNRLQEAIKLLNQSYINLKDI. A helical membrane pass occupies residues 1308-1328; it reads WYVWLLIGFAGVAMLVLLFFI. At 1329–1363 the chain is on the cytoplasmic side; sequence CCCTGCGTSCFKKCGGCCDDYTGHQELVIKTSHDD. Positions 1359–1363 match the KxHxx motif; it reads TSHDD.

This sequence belongs to the betacoronaviruses spike protein family. Homotrimer; each monomer consists of a S1 and a S2 subunit. The resulting peplomers protrude from the virus surface as spikes. Specific enzymatic cleavages in vivo yield mature proteins. The precursor is processed into S1 and S2 by host cell furin or another cellular protease to yield the mature S1 and S2 proteins. Additionally, a second cleavage leads to the release of a fusion peptide after viral attachment to host cell receptor. In terms of processing, the cytoplasmic Cys-rich domain is palmitoylated. Spike glycoprotein is digested within host endosomes.

It localises to the virion membrane. The protein resides in the host endoplasmic reticulum-Golgi intermediate compartment membrane. The protein localises to the host cell membrane. Functionally, attaches the virion to the cell membrane by interacting with host receptor, initiating the infection. In terms of biological role, mediates fusion of the virion and cellular membranes by acting as a class I viral fusion protein. Under the current model, the protein has at least three conformational states: pre-fusion native state, pre-hairpin intermediate state, and post-fusion hairpin state. During viral and target cell membrane fusion, the coiled coil regions (heptad repeats) assume a trimer-of-hairpins structure, positioning the fusion peptide in close proximity to the C-terminal region of the ectodomain. The formation of this structure appears to drive apposition and subsequent fusion of viral and target cell membranes. Acts as a viral fusion peptide which is unmasked following S2 cleavage occurring upon virus endocytosis. This is Spike glycoprotein from Bos taurus (Bovine).